Reading from the N-terminus, the 400-residue chain is Nicotinate phosphoribosyltransferase (400 aa).

At H220 the chain carries Phosphohistidine; by autocatalysis.

This sequence belongs to the NAPRTase family. In terms of processing, transiently phosphorylated on a His residue during the reaction cycle. Phosphorylation strongly increases the affinity for substrates and increases the rate of nicotinate D-ribonucleotide production. Dephosphorylation regenerates the low-affinity form of the enzyme, leading to product release.

The catalysed reaction is nicotinate + 5-phospho-alpha-D-ribose 1-diphosphate + ATP + H2O = nicotinate beta-D-ribonucleotide + ADP + phosphate + diphosphate. Its pathway is cofactor biosynthesis; NAD(+) biosynthesis; nicotinate D-ribonucleotide from nicotinate: step 1/1. Its function is as follows. Catalyzes the synthesis of beta-nicotinate D-ribonucleotide from nicotinate and 5-phospho-D-ribose 1-phosphate at the expense of ATP. This is Nicotinate phosphoribosyltransferase from Escherichia coli O17:K52:H18 (strain UMN026 / ExPEC).